Here is a 90-residue protein sequence, read N- to C-terminus: Acylphosphatase (90 aa).

One can recognise an Acylphosphatase-like domain in the interval 3–89; the sequence is ALKIRVEGIV…EGYEDFTIKY (87 aa). Residues R18 and N36 contribute to the active site.

It belongs to the acylphosphatase family.

It catalyses the reaction an acyl phosphate + H2O = a carboxylate + phosphate + H(+). This is Acylphosphatase (acyP) from Thermotoga maritima (strain ATCC 43589 / DSM 3109 / JCM 10099 / NBRC 100826 / MSB8).